The following is a 317-amino-acid chain: Acetyl-coenzyme A carboxylase carboxyl transferase subunit alpha (317 aa).

A CoA carboxyltransferase C-terminal domain is found at Arg-40–Asp-294.

This sequence belongs to the AccA family. As to quaternary structure, acetyl-CoA carboxylase is a heterohexamer composed of biotin carboxyl carrier protein (AccB), biotin carboxylase (AccC) and two subunits each of ACCase subunit alpha (AccA) and ACCase subunit beta (AccD).

The protein resides in the cytoplasm. It catalyses the reaction N(6)-carboxybiotinyl-L-lysyl-[protein] + acetyl-CoA = N(6)-biotinyl-L-lysyl-[protein] + malonyl-CoA. The protein operates within lipid metabolism; malonyl-CoA biosynthesis; malonyl-CoA from acetyl-CoA: step 1/1. In terms of biological role, component of the acetyl coenzyme A carboxylase (ACC) complex. First, biotin carboxylase catalyzes the carboxylation of biotin on its carrier protein (BCCP) and then the CO(2) group is transferred by the carboxyltransferase to acetyl-CoA to form malonyl-CoA. This chain is Acetyl-coenzyme A carboxylase carboxyl transferase subunit alpha, found in Actinobacillus succinogenes (strain ATCC 55618 / DSM 22257 / CCUG 43843 / 130Z).